The primary structure comprises 142 residues: RNA polymerase-binding transcription factor DksA (142 aa).

Disordered regions lie at residues 1-20 (MQTA…EDEP), 51-70 (HLQK…SSET), and 119-142 (RPTA…HRDD). The dksA C4-type zinc-finger motif lies at 104–128 (CEETGEPIGLARLEARPTATMSVEA). A compositionally biased stretch (basic and acidic residues) spans 128-142 (AQERHERRERVHRDD).

Belongs to the DksA family. In terms of assembly, interacts directly with the RNA polymerase.

The protein localises to the cytoplasm. Transcription factor that acts by binding directly to the RNA polymerase (RNAP). Required for negative regulation of rRNA expression and positive regulation of several amino acid biosynthesis promoters. The polypeptide is RNA polymerase-binding transcription factor DksA (Caulobacter vibrioides (strain ATCC 19089 / CIP 103742 / CB 15) (Caulobacter crescentus)).